The sequence spans 317 residues: uncharacterized protein (317 aa).

Transmembrane regions (helical) follow at residues 24-44 (ISIIVLTTVFIVNYIMSTGIM), 63-83 (LSISSTLACFFSPTVGYSILA), 136-156 (LGVALAKTIIGFLYLSIISED), 187-207 (LIPIMFFMMTLVLYLSKIGFF), 229-249 (ILALTEIMNVQAAIVMAGGFL), 252-272 (GILSSKEVLIGLIIGNVLTFS), and 295-315 (IVMVNAAITLLLDIFIIAGLL).

To M.jannaschii MJ0880, MJ1556 and MJ1589.

Its subcellular location is the cell membrane. This is an uncharacterized protein from Methanocaldococcus jannaschii (strain ATCC 43067 / DSM 2661 / JAL-1 / JCM 10045 / NBRC 100440) (Methanococcus jannaschii).